Reading from the N-terminus, the 190-residue chain is Elongation factor P 2 (190 aa).

The protein belongs to the elongation factor P family.

It localises to the cytoplasm. It functions in the pathway protein biosynthesis; polypeptide chain elongation. In terms of biological role, involved in peptide bond synthesis. Stimulates efficient translation and peptide-bond synthesis on native or reconstituted 70S ribosomes in vitro. Probably functions indirectly by altering the affinity of the ribosome for aminoacyl-tRNA, thus increasing their reactivity as acceptors for peptidyl transferase. The polypeptide is Elongation factor P 2 (efp2) (Chlamydia pneumoniae (Chlamydophila pneumoniae)).